The following is a 116-amino-acid chain: Ribosome-binding factor A (116 aa).

It belongs to the RbfA family. Monomer. Binds 30S ribosomal subunits, but not 50S ribosomal subunits or 70S ribosomes.

The protein localises to the cytoplasm. Functionally, one of several proteins that assist in the late maturation steps of the functional core of the 30S ribosomal subunit. Associates with free 30S ribosomal subunits (but not with 30S subunits that are part of 70S ribosomes or polysomes). Required for efficient processing of 16S rRNA. May interact with the 5'-terminal helix region of 16S rRNA. This is Ribosome-binding factor A from Streptococcus equi subsp. zooepidemicus (strain H70).